The sequence spans 299 residues: Kynurenine formamidase-like hydrolase fscH (299 aa).

The HGGXW signature appears at 48–52 (HGGAW). Residues 90–110 (SPRTPSQPVPSGGHVGGEQQA) form a disordered region. S142 acts as the Nucleophile in catalysis.

Belongs to the kynurenine formamidase family.

It functions in the pathway secondary metabolite biosynthesis. In terms of biological role, kynurenine formamidase-like hydrolase; part of the fragmented gene cluster that mediates the biosynthesis of fusarochromene, a tryptophan-derived metabolite closely related to a group of mycotoxins including fusarochromanone. Within the pathway, fscH converts the product of fscD into 4-hydroxykyrunenine. The first step of the pathway is the epimerization of L-tryptophan to D-tryptophan in the presence of the NRPS-like tryptophan epimerase fscC. D-tryptophan is subsequently hydroxylated by the tryptophan 6-hydroxylase fscE to yield 6-hydroxytryptophan. The pyrrole ring undergoes cleavaged by the tryptophan 2,3-dioxygenase fscD and is finally converted to 4-hydroxykyrunenine by the hydrolase fscH. The NRPS-like oxidoreductase fscA reduces the carboxyl group to primary alcohol and the DMATS-type prenyltransferase fscG performs prenylation, followed by the formation of a chromene ring catalyzed by the oxidoreductase fscI, which leads to desacetylfusarochromene. Epoxidation by fscF and rearrangement reactions of chromene double bonds convert compound desacetylfusarochromene to fusarochromanones. Although specific acetyltransferases were not found near the fsc gene cluster, several predicted enzymes containing the N-acetyltransferase superfamily domain are present in the genome of F.equiseti. These predicted enzymes may have the potential to convert desacetylfusarochromene to fusarochromene. The protein is Kynurenine formamidase-like hydrolase fscH of Fusarium equiseti (Fusarium scirpi).